We begin with the raw amino-acid sequence, 284 residues long: L-ribulose-5-phosphate 3-epimerase UlaE (284 aa).

It belongs to the L-ribulose-5-phosphate 3-epimerase family.

It carries out the reaction L-ribulose 5-phosphate = L-xylulose 5-phosphate. The protein operates within cofactor degradation; L-ascorbate degradation; D-xylulose 5-phosphate from L-ascorbate: step 3/4. Catalyzes the isomerization of L-xylulose-5-phosphate to L-ribulose-5-phosphate. Is involved in the anaerobic L-ascorbate utilization. This chain is L-ribulose-5-phosphate 3-epimerase UlaE, found in Escherichia coli O157:H7 (strain EC4115 / EHEC).